Here is a 134-residue protein sequence, read N- to C-terminus: Small ribosomal subunit protein uS11 (134 aa).

The segment at 114–134 (TPVPHNGTRPPRKWFKRQEKR) is disordered. The segment covering 123–134 (PPRKWFKRQEKR) has biased composition (basic residues).

This sequence belongs to the universal ribosomal protein uS11 family. In terms of assembly, part of the 30S ribosomal subunit. Interacts with proteins S7 and S18. Binds to IF-3.

Functionally, located on the platform of the 30S subunit, it bridges several disparate RNA helices of the 16S rRNA. Forms part of the Shine-Dalgarno cleft in the 70S ribosome. The chain is Small ribosomal subunit protein uS11 from Mesomycoplasma hyopneumoniae (strain 232) (Mycoplasma hyopneumoniae).